The following is a 103-amino-acid chain: MYAVIKTGGKQYKVAVGEKLKVEQIPADIDAEITLDQVLAVGEGESIKFGTPLVSGASVKATVVSHGRHAKVTIFKMRRRKHYQKHGGHRQNYTELRIDAINA.

The protein belongs to the bacterial ribosomal protein bL21 family. In terms of assembly, part of the 50S ribosomal subunit. Contacts protein L20.

Functionally, this protein binds to 23S rRNA in the presence of protein L20. The protein is Large ribosomal subunit protein bL21 of Burkholderia ambifaria (strain MC40-6).